The following is a 535-amino-acid chain: GMP synthase [glutamine-hydrolyzing] (535 aa).

The Glutamine amidotransferase type-1 domain occupies 20-210 (PVLVVDFGAQ…LHRCAALPND (191 aa)). The active-site Nucleophile is the cysteine 97. Catalysis depends on residues histidine 184 and glutamate 186. The region spanning 211 to 409 (WDASSIIEDQ…LGLPDEIVWR (199 aa)) is the GMPS ATP-PPase domain. An ATP-binding site is contributed by 238 to 244 (SGGVDSA).

In terms of assembly, homodimer.

It catalyses the reaction XMP + L-glutamine + ATP + H2O = GMP + L-glutamate + AMP + diphosphate + 2 H(+). The protein operates within purine metabolism; GMP biosynthesis; GMP from XMP (L-Gln route): step 1/1. Catalyzes the synthesis of GMP from XMP. This chain is GMP synthase [glutamine-hydrolyzing], found in Bifidobacterium longum (strain NCC 2705).